A 306-amino-acid polypeptide reads, in one-letter code: MIPDLSVNFAGIKLKNPVLTASGTFGYGYELADLIPLKRLGGVVTKTVTLEPRAGNLQPRIAEVASGILNSIGLQNIGVRAFIEEPLEKLNKIGVPVIVSVAGVAVGEYVEIVKILSSQNGVSAIELNLSCPNLKKKIVCHDLPLMRDVIRGVKKVSRVPVIAKLSPLVTDISELALTAQNAGADGVTLTNTYPAMAVDIRTFKPKLSTVKGGMSGACIKPMSVRCVYDAYQDIKIPIIGCGGIMMGEDAVEFILAGATAVSVGSSSLVSPGNLIAIIDGIEDILKEKNIKSVKKIIGGINKVRNA.

FMN is bound by residues S22 and K46–T47. Residues K46, N70 to L74, and N128 contribute to the substrate site. FMN is bound at residue N128. C131 functions as the Nucleophile in the catalytic mechanism. K164 serves as a coordination point for FMN. N191–T192 contacts substrate. FMN-binding positions include G216, G242–G243, and G264–S265.

This sequence belongs to the dihydroorotate dehydrogenase family. Type 1 subfamily. As to quaternary structure, heterotetramer of 2 PyrK and 2 PyrD type B subunits. FMN serves as cofactor.

It localises to the cytoplasm. It catalyses the reaction (S)-dihydroorotate + NAD(+) = orotate + NADH + H(+). It functions in the pathway pyrimidine metabolism; UMP biosynthesis via de novo pathway; orotate from (S)-dihydroorotate (NAD(+) route): step 1/1. Functionally, catalyzes the conversion of dihydroorotate to orotate with NAD(+) as electron acceptor. In Endomicrobium trichonymphae, this protein is Dihydroorotate dehydrogenase B (NAD(+)), catalytic subunit (pyrD).